Reading from the N-terminus, the 76-residue chain is UPF0291 protein BC_1827 (76 aa).

This sequence belongs to the UPF0291 family.

Its subcellular location is the cytoplasm. The polypeptide is UPF0291 protein BC_1827 (Bacillus cereus (strain ATCC 14579 / DSM 31 / CCUG 7414 / JCM 2152 / NBRC 15305 / NCIMB 9373 / NCTC 2599 / NRRL B-3711)).